We begin with the raw amino-acid sequence, 265 residues long: MEDINFSSLAPRHGTRPYMGTWNEIGTSQLNGGAFNWNSIWSGLKNFGSTIKTYGTKAWNSQTGQMLRDKLKDQNFQQKVVDGLASGINGVVDIANQAVQKKIANRLEPRPDEVMVEEKLPPLETVPGSVPTKGEKRPRPDAEETLVTHTTEPPSYEEAIKQGAALSPTTYPMTKPILPMATRVYGKNENVPMTLELPPLPEPTIADPVGSVPVASVPVASTVSRPAVRPVAVASLRNPRSSNWQSTLNSIVGLGVKSLKRRRCY.

A propeptide spanning residues 1–33 (MEDINFSSLAPRHGTRPYMGTWNEIGTSQLNGG) is cleaved from the precursor. An amphipathic alpha-helix essential for membrane lytic activity region spans residues 34 to 54 (AFNWNSIWSGLKNFGSTIKTY). Residues 36-53 (NWNSIWSGLKNFGSTIKT) form an involved in endosomal membrane lysis region. Residues 48–74 (GSTIKTYGTKAWNSQTGQMLRDKLKDQ) are interaction with hexon protein. Positions 67–76 (LRDKLKDQNF) match the Nuclear export signal motif. Residues 123 to 155 (LETVPGSVPTKGEKRPRPDAEETLVTHTTEPPS) form a disordered region. Positions 133–142 (KGEKRPRPDA) are enriched in basic and acidic residues. A Nuclear localization signal motif is present at residues 136–140 (KRPRP). Thr-148 is modified (phosphothreonine; by host). Positions 153–156 (PPSY) match the PPXY motif motif. Residues 246 to 257 (STLNSIVGLGVK) carry the Nuclear export signal motif. An interaction with hexon protein region spans residues 248 to 254 (LNSIVGL). Positions 255–265 (GVKSLKRRRCY) are binds to importin alpha/beta, involved in hexon nuclear import. The Nuclear localization signal signature appears at 260-263 (KRRR).

Belongs to the adenoviridae protein VI family. Interacts with hexon protein; this interaction allows nuclear import of hexon trimers and possibly pre-capsid assembly. Interacts (via C-terminal NLS) with importin alpha/beta. As to quaternary structure, interacts (via PPxY motif) with host NEDD4 ubiquitine ligase; this interaction might play a role in virus intracellular transport during entry. Part of a complex composed of the core-capsid bridging protein, the endosome lysis protein VI and the hexon-linking protein VIII; these interactions bridge the virus core to the capsid. Interacts with peripentonal hexons; this interaction stabilizes the capsid by gluing two peripentonal hexons together and joining them with an adjacent group-of-nine hexon. In terms of assembly, heterodimer with the viral protease; disulfide-linked. Interacts with the viral protease. In terms of processing, ubiquitinated by Nedd4 following partial capsid disassembly; which might play a role in intracellular virus movement during entry. Contains the major nuclear import and export signals. Proteolytically removed during virion maturation. The processing of the C-terminus turns the precursor into a mature viral structural protein and abrogates its ability to promote hexon import and act as a potential chaperone protein.

Its subcellular location is the host nucleus. The protein resides in the host cytoplasm. The protein localises to the virion. In terms of biological role, during virus assembly, promotes hexon trimers nuclear import through nuclear pore complexes via an importin alpha/beta-dependent mechanism. By analogy to herpesviruses capsid assembly, might act as a chaperone to promote the formation of the icosahedral capsid. Structural component of the virion that provides increased stability to the particle shell through its interaction with the core-capsid bridging protein and the hexon-linking protein VIII. Fibers shedding during virus entry into host cell allows the endosome lysis protein to be exposed as a membrane-lytic peptide. Exhibits pH-independent membrane fragmentation activity and probably mediates viral rapid escape from host endosome via organellar membrane lysis. It is not clear if it then remains partially associated with the capsid and involved in the intracellular microtubule-dependent transport of capsid to the nucleus, or if it is lost during endosomal penetration. Its function is as follows. Cofactor that activates the viral protease. Binds to viral protease in a 1:1 ratio. In Human adenovirus A serotype 12 (HAdV-12), this protein is Pre-protein VI.